Here is a 448-residue protein sequence, read N- to C-terminus: Hydroxycinnamoyl-CoA:piscidic acid hydroxycinnamoyltransferase (448 aa).

Catalysis depends on proton acceptor residues histidine 153 and aspartate 395.

Belongs to the plant acyltransferase family. In terms of tissue distribution, highly expressed in root and rhizome. Expressed in senescent leaf and callus tissues. Expressed in detached leaf treated for 18 hours with ethephon, methyl jasmonate, salicylic acid or illuminated for 24 hours with UV light. Not expressed in mature leaf. Expressed at low levels in leaves and flowers.

The enzyme catalyses (2R,3S)-piscidate + (E)-4-coumaroyl-CoA = cimicifugate K + CoA. It carries out the reaction (2R,3S)-piscidate + (E)-caffeoyl-CoA = cimicifugate D + CoA. The catalysed reaction is (2R,3S)-piscidate + (E)-sinapoyl-CoA = cimicifugate J + CoA. It catalyses the reaction (2R,3S)-piscidate + (E)-feruloyl-CoA = cimicifugate E + CoA. It functions in the pathway phenylpropanoid metabolism. Catalyzes the formation of cimicifugic acids. Uses hydroxycinnamoyl-CoA thioesters as hydroxycinnamoyl donor substrates. Has a strict specificity for piscidic acid as an acceptor substrate as none of the various other acceptors tested including 4-hydroxyphenyllactic acid, malate, spermidine or tetrahydroxyhexanedioic acid are substrates. Donor substrates include 4-coumaroyl-CoA, caffeoyl-CoA, sinapoyl-CoA and feruloyl-CoA. No activity with cinnamoyl-CoA, isoferuloyl-CoA, 3,4-dimethoxycinnamoyl-CoA or 3,4-dihydroxybenzoyl-CoA as donors. In the reverse reaction with fukinolic acid and CoA as substrates, a formation of fukiic acid is evident. Hence, fukiic acid may also serve as an acceptor substrate. Involved in the biosynthesis of cimicifugic and possibly fukinolic acids. This is Hydroxycinnamoyl-CoA:piscidic acid hydroxycinnamoyltransferase from Actaea racemosa (Black cohosh).